The sequence spans 184 residues: ATP-dependent protease subunit HslV (184 aa).

Thr12 is a catalytic residue. Residues Ala166, Cys169, and Thr172 each contribute to the Na(+) site.

It belongs to the peptidase T1B family. HslV subfamily. In terms of assembly, a double ring-shaped homohexamer of HslV is capped on each side by a ring-shaped HslU homohexamer. The assembly of the HslU/HslV complex is dependent on binding of ATP.

It localises to the cytoplasm. The catalysed reaction is ATP-dependent cleavage of peptide bonds with broad specificity.. Allosterically activated by HslU binding. In terms of biological role, protease subunit of a proteasome-like degradation complex believed to be a general protein degrading machinery. The sequence is that of ATP-dependent protease subunit HslV from Brucella canis (strain ATCC 23365 / NCTC 10854 / RM-666).